A 324-amino-acid polypeptide reads, in one-letter code: Beta-ketoacyl-[acyl-carrier-protein] synthase III (324 aa).

Catalysis depends on residues C112 and H251. The ACP-binding stretch occupies residues 252–256 (QANLR). The active site involves N281.

Belongs to the thiolase-like superfamily. FabH family. As to quaternary structure, homodimer.

Its subcellular location is the cytoplasm. The enzyme catalyses malonyl-[ACP] + acetyl-CoA + H(+) = 3-oxobutanoyl-[ACP] + CO2 + CoA. It functions in the pathway lipid metabolism; fatty acid biosynthesis. Functionally, catalyzes the condensation reaction of fatty acid synthesis by the addition to an acyl acceptor of two carbons from malonyl-ACP. Catalyzes the first condensation reaction which initiates fatty acid synthesis and may therefore play a role in governing the total rate of fatty acid production. Possesses both acetoacetyl-ACP synthase and acetyl transacylase activities. Its substrate specificity determines the biosynthesis of branched-chain and/or straight-chain of fatty acids. In Clostridium perfringens (strain 13 / Type A), this protein is Beta-ketoacyl-[acyl-carrier-protein] synthase III.